Reading from the N-terminus, the 358-residue chain is MRSIVIAAGGTGGHISPGVALAEVLTDLKEKIGYENLYLYSLIRNQNNPDLEQAPCPVLWHNLPPLSSNIFLFPFRYTIQILKTFLLFKKLNVDVVIGMGGYSTVSSILYGILFKKKIYLCEQNTVPGNVSRLFFRFANKAAFSFPPKNSAIPCDYQVLGNPLRKKTLPKMSLKFSEKYDTKKKTQFNVLVMGGSQGARQINNIVIALMGHEEINIQFRFRVLTGSALYEEVSKKTKKDAELISYSDNMKEHYEWANFVIARAGSGVLSECAAFALPMILIPYPYAKDDHQMANARYLELNGAAIVIDQKDEDESHLFKVLDQIANNVNLLNDMSISSLQCSHVDASKDTVKYFFSLD.

UDP-N-acetyl-alpha-D-glucosamine-binding positions include 11 to 13 (TGG), Asn-124, Arg-164, Ser-195, and Gln-291.

This sequence belongs to the glycosyltransferase 28 family. MurG subfamily.

The protein resides in the cell inner membrane. The catalysed reaction is di-trans,octa-cis-undecaprenyl diphospho-N-acetyl-alpha-D-muramoyl-L-alanyl-D-glutamyl-meso-2,6-diaminopimeloyl-D-alanyl-D-alanine + UDP-N-acetyl-alpha-D-glucosamine = di-trans,octa-cis-undecaprenyl diphospho-[N-acetyl-alpha-D-glucosaminyl-(1-&gt;4)]-N-acetyl-alpha-D-muramoyl-L-alanyl-D-glutamyl-meso-2,6-diaminopimeloyl-D-alanyl-D-alanine + UDP + H(+). Its pathway is cell wall biogenesis; peptidoglycan biosynthesis. Its function is as follows. Cell wall formation. Catalyzes the transfer of a GlcNAc subunit on undecaprenyl-pyrophosphoryl-MurNAc-pentapeptide (lipid intermediate I) to form undecaprenyl-pyrophosphoryl-MurNAc-(pentapeptide)GlcNAc (lipid intermediate II). This chain is UDP-N-acetylglucosamine--N-acetylmuramyl-(pentapeptide) pyrophosphoryl-undecaprenol N-acetylglucosamine transferase, found in Leptospira borgpetersenii serovar Hardjo-bovis (strain JB197).